We begin with the raw amino-acid sequence, 308 residues long: Glutaminase (308 aa).

Substrate-binding residues include S66, N117, E161, N168, Y192, Y244, and V262.

It belongs to the glutaminase family. Homotetramer.

It carries out the reaction L-glutamine + H2O = L-glutamate + NH4(+). The chain is Glutaminase from Cronobacter sakazakii (strain ATCC BAA-894) (Enterobacter sakazakii).